We begin with the raw amino-acid sequence, 363 residues long: Protein RecA (363 aa).

79 to 86 contacts ATP; that stretch reads GPESSGKT.

Belongs to the RecA family.

It localises to the cytoplasm. Functionally, can catalyze the hydrolysis of ATP in the presence of single-stranded DNA, the ATP-dependent uptake of single-stranded DNA by duplex DNA, and the ATP-dependent hybridization of homologous single-stranded DNAs. It interacts with LexA causing its activation and leading to its autocatalytic cleavage. The protein is Protein RecA of Borrelia turicatae (strain 91E135).